The chain runs to 155 residues: Large ribosomal subunit protein uL22 (155 aa).

This sequence belongs to the universal ribosomal protein uL22 family. As to quaternary structure, part of the 50S ribosomal subunit.

Its function is as follows. This protein binds specifically to 23S rRNA. It makes multiple contacts with different domains of the 23S rRNA in the assembled 50S subunit and ribosome. In terms of biological role, the globular domain of the protein is located near the polypeptide exit tunnel on the outside of the subunit, while an extended beta-hairpin is found that lines the wall of the exit tunnel in the center of the 70S ribosome. The sequence is that of Large ribosomal subunit protein uL22 from Pyrococcus abyssi (strain GE5 / Orsay).